Consider the following 299-residue polypeptide: Ribosomal RNA small subunit methyltransferase H (299 aa).

S-adenosyl-L-methionine-binding positions include 36 to 38 (GGH), Asp55, Tyr82, Asp103, and Gln110. Composition is skewed to basic and acidic residues over residues 269–282 (PVRP…ENPR) and 289–299 (RAAERIEEGGD). The tract at residues 269–299 (PVRPSEEEIRENPRARSGRLRAAERIEEGGD) is disordered.

It belongs to the methyltransferase superfamily. RsmH family.

The protein localises to the cytoplasm. It carries out the reaction cytidine(1402) in 16S rRNA + S-adenosyl-L-methionine = N(4)-methylcytidine(1402) in 16S rRNA + S-adenosyl-L-homocysteine + H(+). In terms of biological role, specifically methylates the N4 position of cytidine in position 1402 (C1402) of 16S rRNA. In Thermotoga maritima (strain ATCC 43589 / DSM 3109 / JCM 10099 / NBRC 100826 / MSB8), this protein is Ribosomal RNA small subunit methyltransferase H.